The primary structure comprises 275 residues: Chlorobenzene dihydrodiol dehydrogenase (275 aa).

Residue tyrosine 155 is the Proton acceptor of the active site.

Belongs to the short-chain dehydrogenases/reductases (SDR) family.

The enzyme catalyses (1R,2R)-3-chlorocyclohexa-3,5-diene-1,2-diol + NAD(+) = 3-chlorocatechol + NADH + H(+). The protein operates within aromatic compound metabolism. Can transform various dihydrodiols of chlorobenzenes and chlorotoluenes into the respective catechols. This is Chlorobenzene dihydrodiol dehydrogenase from Cupriavidus sp. (strain PS12).